Here is a 134-residue protein sequence, read N- to C-terminus: Estradiol 17-beta-dehydrogenase 8 (134 aa).

Serine 38 contacts substrate. N6-succinyllysine is present on lysine 42. The active-site Proton acceptor is tyrosine 51. NAD(+) contacts are provided by residues 51-55 (YAASK) and 84-86 (IAT). At lysine 55 the chain carries N6-succinyllysine.

This sequence belongs to the short-chain dehydrogenases/reductases (SDR) family. Heterotetramer with CBR4; contains two molecules of HSD17B8 and CBR4.

The protein localises to the mitochondrion matrix. The catalysed reaction is 17beta-estradiol + NAD(+) = estrone + NADH + H(+). It catalyses the reaction 17beta-estradiol + NADP(+) = estrone + NADPH + H(+). The enzyme catalyses testosterone + NAD(+) = androst-4-ene-3,17-dione + NADH + H(+). It participates in steroid biosynthesis; estrogen biosynthesis. Its pathway is lipid metabolism; fatty acid biosynthesis. Functionally, NAD-dependent 17-beta-hydroxysteroid dehydrogenase with highest activity towards estradiol. Has very low activity towards testosterone. The heterotetramer with CBR4 has NADH-dependent 3-ketoacyl-acyl carrier protein reductase activity, and thereby plays a role in mitochondrial fatty acid biosynthesis. Within the heterotetramer, HSD17B8 binds NADH; CBR4 binds NADPD. This chain is Estradiol 17-beta-dehydrogenase 8 (HSD17B8), found in Callithrix jacchus (White-tufted-ear marmoset).